A 504-amino-acid chain; its full sequence is Trifunctional (S)-stylopine synthase/(S)-nandinine synthase/(S)-canadine synthase (504 aa).

Residues 16–36 (SSTTTTTTILLSLLFTIFIIL) traverse the membrane as a helical segment. Cys448 lines the heme pocket.

The protein belongs to the cytochrome P450 family. It depends on heme as a cofactor. As to expression, expressed in roots and at lower levels in stems, leaves and plantlets.

Its subcellular location is the endoplasmic reticulum membrane. It catalyses the reaction (S)-cheilanthifoline + reduced [NADPH--hemoprotein reductase] + O2 = (S)-stylopine + oxidized [NADPH--hemoprotein reductase] + 2 H2O + H(+). It carries out the reaction (S)-tetrahydrocolumbamine + reduced [NADPH--hemoprotein reductase] + O2 = (S)-canadine + oxidized [NADPH--hemoprotein reductase] + 2 H2O + H(+). The enzyme catalyses (S)-scoulerine + reduced [NADPH--hemoprotein reductase] + O2 = (S)-nandinine + oxidized [NADPH--hemoprotein reductase] + 2 H2O + H(+). Methylenedioxy bridge-forming cytochrome P450 involved in the biosynthesis of isoquinoline alkaloids. Converts (S)-cheilanthifoline to (S)-stylopine, (S)-scoulerine to (S)-nandinine and (S)-tetrahydrocolumbamine to (S)-canadine. Can be involved in both sanguinarine and berberine biosynthesis. Catalyzes an oxidative reaction that does not incorporate oxygen into the product. This chain is Trifunctional (S)-stylopine synthase/(S)-nandinine synthase/(S)-canadine synthase, found in Argemone mexicana (Mexican prickly poppy).